The primary structure comprises 300 residues: Haloalkane dehalogenase (300 aa).

The AB hydrolase-1 domain occupies 32–155 (AIVFQHGNPT…PAVRGVFQGF (124 aa)). The Nucleophile role is filled by Asp109. The active-site Proton donor is Glu133. Catalysis depends on His273, which acts as the Proton acceptor.

Belongs to the haloalkane dehalogenase family. Type 2 subfamily. As to quaternary structure, monomer.

It carries out the reaction 1-haloalkane + H2O = a halide anion + a primary alcohol + H(+). Its function is as follows. Catalyzes hydrolytic cleavage of carbon-halogen bonds in halogenated aliphatic compounds, leading to the formation of the corresponding primary alcohols, halide ions and protons. This chain is Haloalkane dehalogenase, found in Mycobacterium bovis (strain BCG / Pasteur 1173P2).